Reading from the N-terminus, the 129-residue chain is Lysozyme C-1/C-2 (129 aa).

A C-type lysozyme domain is found at 1–129 (KVFERCELAR…VSSYVEGCTL (129 aa)). 4 disulfides stabilise this stretch: Cys-6–Cys-127, Cys-30–Cys-115, Cys-65–Cys-81, and Cys-77–Cys-95. Active-site residues include Glu-35 and Asp-53.

The protein belongs to the glycosyl hydrolase 22 family. As to quaternary structure, monomer.

It catalyses the reaction Hydrolysis of (1-&gt;4)-beta-linkages between N-acetylmuramic acid and N-acetyl-D-glucosamine residues in a peptidoglycan and between N-acetyl-D-glucosamine residues in chitodextrins.. Lysozymes have primarily a bacteriolytic function; those in tissues and body fluids are associated with the monocyte-macrophage system and enhance the activity of immunoagents. The chain is Lysozyme C-1/C-2 from Axis axis (Axis deer).